Here is a 407-residue protein sequence, read N- to C-terminus: Probable endo-beta-1,4-glucanase celB (407 aa).

The N-terminal stretch at 1–18 is a signal peptide; the sequence is MALTLAATALVLLPLVTA. N136 is a glycosylation site (N-linked (GlcNAc...) asparagine). The active-site Nucleophile is the E216. Catalysis depends on E221, which acts as the Proton donor.

This sequence belongs to the glycosyl hydrolase 7 (cellulase C) family.

The protein resides in the secreted. The catalysed reaction is Endohydrolysis of (1-&gt;4)-beta-D-glucosidic linkages in cellulose, lichenin and cereal beta-D-glucans.. Its function is as follows. Has endoglucanase activity on substrates containing beta-1,4 glycosidic bonds, like in carboxymethylcellulose (CMC), hydroxyethylcellulose (HEC) and beta-glucan. Involved in the degradation of complex natural cellulosic substrates. The sequence is that of Probable endo-beta-1,4-glucanase celB (celB) from Neosartorya fischeri (strain ATCC 1020 / DSM 3700 / CBS 544.65 / FGSC A1164 / JCM 1740 / NRRL 181 / WB 181) (Aspergillus fischerianus).